The following is a 115-amino-acid chain: uncharacterized protein (115 aa).

Residues 90–100 (THFGRPATRRR) show a composition bias toward basic residues. The disordered stretch occupies residues 90 to 115 (THFGRPATRRRPLGEREVNPSARSLG).

This is an uncharacterized protein from Saccharomyces cerevisiae (strain ATCC 204508 / S288c) (Baker's yeast).